Here is a 640-residue protein sequence, read N- to C-terminus: tRNA uridine 5-carboxymethylaminomethyl modification enzyme MnmG (640 aa).

9 to 14 (GGGHAG) contacts FAD. 289–303 (GPRYCPSIEDKINKF) provides a ligand contact to NAD(+).

The protein belongs to the MnmG family. In terms of assembly, homodimer. Heterotetramer of two MnmE and two MnmG subunits. Requires FAD as cofactor.

Its subcellular location is the cytoplasm. In terms of biological role, NAD-binding protein involved in the addition of a carboxymethylaminomethyl (cmnm) group at the wobble position (U34) of certain tRNAs, forming tRNA-cmnm(5)s(2)U34. In Campylobacter hominis (strain ATCC BAA-381 / DSM 21671 / CCUG 45161 / LMG 19568 / NCTC 13146 / CH001A), this protein is tRNA uridine 5-carboxymethylaminomethyl modification enzyme MnmG.